A 330-amino-acid chain; its full sequence is tRNA U34 carboxymethyltransferase (330 aa).

Residues lysine 91, tryptophan 105, lysine 110, glycine 130, 152–154 (DPS), 181–182 (IE), methionine 196, tyrosine 200, and arginine 315 each bind carboxy-S-adenosyl-L-methionine.

Belongs to the class I-like SAM-binding methyltransferase superfamily. CmoB family. In terms of assembly, homotetramer.

The catalysed reaction is carboxy-S-adenosyl-L-methionine + 5-hydroxyuridine(34) in tRNA = 5-carboxymethoxyuridine(34) in tRNA + S-adenosyl-L-homocysteine + H(+). Catalyzes carboxymethyl transfer from carboxy-S-adenosyl-L-methionine (Cx-SAM) to 5-hydroxyuridine (ho5U) to form 5-carboxymethoxyuridine (cmo5U) at position 34 in tRNAs. This is tRNA U34 carboxymethyltransferase from Shewanella denitrificans (strain OS217 / ATCC BAA-1090 / DSM 15013).